Here is a 500-residue protein sequence, read N- to C-terminus: Intracellular exo-alpha-(1-&gt;5)-L-arabinofuranosidase (500 aa).

Alpha-L-arabinofuranose-binding residues include Glu-28, Asn-73, and Asn-173. Glu-174 functions as the Proton donor/acceptor in the catalytic mechanism. Tyr-245, Glu-293, and Gln-350 together coordinate alpha-L-arabinofuranose. Residue Glu-293 is the Nucleophile of the active site.

Belongs to the glycosyl hydrolase 51 family. Homohexamer; trimer of dimers.

It localises to the cytoplasm. It carries out the reaction Hydrolysis of terminal non-reducing alpha-L-arabinofuranoside residues in alpha-L-arabinosides.. It participates in glycan metabolism; L-arabinan degradation. In terms of biological role, involved in the degradation of arabinan and is a key enzyme in the complete degradation of the plant cell wall. Catalyzes the cleavage of terminal alpha-(1-&gt;5)-arabinofuranosyl bonds in different hemicellulosic homopolysaccharides (branched and debranched arabinans). This chain is Intracellular exo-alpha-(1-&gt;5)-L-arabinofuranosidase (abfA), found in Halalkalibacterium halodurans (strain ATCC BAA-125 / DSM 18197 / FERM 7344 / JCM 9153 / C-125) (Bacillus halodurans).